Reading from the N-terminus, the 662-residue chain is Probable protein phosphatase CG10417 (662 aa).

Residues 23–564 (AVGASSMQGW…DNMTAVIVQF (542 aa)) form the PPM-type phosphatase domain. Mn(2+)-binding residues include aspartate 57 and glycine 58. Disordered regions lie at residues 219 to 275 (DGVA…FKHT) and 288 to 374 (GSND…DEDQ). 3 stretches are compositionally biased toward polar residues: residues 238-252 (DSNTTTSINDLSTKN), 261-275 (NDQNEGSNGTDFKHT), and 288-319 (GSNDMTELNQSSKNEFTNSSTSKEFERNINSS). A phosphoserine mark is found at serine 289 and serine 306. Over residues 320 to 334 (QDDEFTDDDADYEEN) the composition is skewed to acidic residues. The segment covering 337 to 347 (VKSPDTSSAES) has biased composition (polar residues). The segment covering 349-374 (DCTENDDDGDEDGNEDSDEEETDEDQ) has biased composition (acidic residues). Mn(2+)-binding residues include aspartate 506 and aspartate 555. A compositionally biased stretch (polar residues) spans 591 to 609 (VSHSLNDQSASKRCASQNA). The disordered stretch occupies residues 591-662 (VSHSLNDQSA…KEVTIIVSSS (72 aa)). 3 positions are modified to phosphoserine: serine 592, serine 594, and serine 599. Basic and acidic residues predominate over residues 616-637 (LEKNNSKRLKTDLEQENIKDRT). The residue at position 637 (threonine 637) is a Phosphothreonine. 2 positions are modified to phosphoserine: serine 639 and serine 641.

This sequence belongs to the PP2C family. Mg(2+) serves as cofactor. Mn(2+) is required as a cofactor.

It catalyses the reaction O-phospho-L-seryl-[protein] + H2O = L-seryl-[protein] + phosphate. The catalysed reaction is O-phospho-L-threonyl-[protein] + H2O = L-threonyl-[protein] + phosphate. This chain is Probable protein phosphatase CG10417, found in Drosophila melanogaster (Fruit fly).